The chain runs to 423 residues: uncharacterized protein (423 aa).

The signal sequence occupies residues 1 to 16 (MKSRIFFITLLTIVAA). The Extracellular segment spans residues 17 to 402 (QESADQLCSS…SSSAKEEQTS (386 aa)). Disulfide bonds link C24–C217, C33–C43, C36–C68, C46–C57, C219–C238, C230–C241, C243–C252, C254–C288, C271–C286, C280–C291, C293–C303, C305–C327, C310–C325, C319–C330, C332–C341, and C343–C350. N65 carries an N-linked (GlcNAc...) asparagine glycan. The segment at 215–350 (CGCECEKHPE…CSCSTASNNC (136 aa)) is cysteine-rich tandem repeats. I-EGF domains lie at 219-253 (CEKH…DKCE), 254-304 (CPLA…KFCQ), and 305-342 (CDND…DDCS). Residue N274 is glycosylated (N-linked (GlcNAc...) asparagine). N-linked (GlcNAc...) asparagine glycosylation occurs at N307. The interval 354–406 (GTPAPEEKDKPESVPEEPEATEKPDDMPSDSDLEKELDESSSAKEEQTSSSGV) is disordered. Over residues 380–392 (MPSDSDLEKELDE) the composition is skewed to acidic residues. Residues 403-421 (SSGVVSRVCVLLTFFLLVL) traverse the membrane as a helical segment. Residues 422–423 (NF) lie on the Cytoplasmic side of the membrane.

This sequence belongs to the integrin beta chain family.

The protein localises to the membrane. This is an uncharacterized protein from Caenorhabditis elegans.